A 407-amino-acid polypeptide reads, in one-letter code: Chorismate synthase (407 aa).

Positions 40 and 46 each coordinate NADP(+). Residues 138 to 140 (RAS) and 259 to 260 (QA) contribute to the FMN site. Residues 275 to 284 (RRGSRAHDEM) show a composition bias toward basic and acidic residues. Residues 275 to 308 (RRGSRAHDEMYPGTDGVVRSTNRAGGLEGGMTNG) are disordered. FMN-binding positions include Gly303, 318 to 322 (KPIST), and Arg344.

This sequence belongs to the chorismate synthase family. Homotetramer. It depends on FMNH2 as a cofactor.

The catalysed reaction is 5-O-(1-carboxyvinyl)-3-phosphoshikimate = chorismate + phosphate. Its pathway is metabolic intermediate biosynthesis; chorismate biosynthesis; chorismate from D-erythrose 4-phosphate and phosphoenolpyruvate: step 7/7. Catalyzes the anti-1,4-elimination of the C-3 phosphate and the C-6 proR hydrogen from 5-enolpyruvylshikimate-3-phosphate (EPSP) to yield chorismate, which is the branch point compound that serves as the starting substrate for the three terminal pathways of aromatic amino acid biosynthesis. This reaction introduces a second double bond into the aromatic ring system. This is Chorismate synthase from Mycobacterium ulcerans (strain Agy99).